Consider the following 910-residue polypeptide: Leucine--tRNA ligase (910 aa).

Residues P42–H52 carry the 'HIGH' region motif. The short motif at T658 to S662 is the 'KMSKS' region element. Position 661 (K661) interacts with ATP.

It belongs to the class-I aminoacyl-tRNA synthetase family.

The protein resides in the cytoplasm. It catalyses the reaction tRNA(Leu) + L-leucine + ATP = L-leucyl-tRNA(Leu) + AMP + diphosphate. This is Leucine--tRNA ligase from Acidovorax ebreus (strain TPSY) (Diaphorobacter sp. (strain TPSY)).